Consider the following 490-residue polypeptide: Betaine aldehyde dehydrogenase (490 aa).

Positions 27 and 93 each coordinate K(+). Residue Gly150 to Trp152 coordinates NAD(+). Catalysis depends on Lys162, which acts as the Charge relay system. Lys176 to Glu179 lines the NAD(+) pocket. A K(+)-binding site is contributed by Val180. Gly230–Thr233 lines the NAD(+) pocket. Leu246 contributes to the K(+) binding site. Residue Glu252 is the Proton acceptor of the active site. NAD(+)-binding residues include Gly254, Cys286, and Glu387. Cys286 acts as the Nucleophile in catalysis. Residue Cys286 is modified to Cysteine sulfenic acid (-SOH). K(+)-binding residues include Lys457 and Gly460. The active-site Charge relay system is the Glu464.

Belongs to the aldehyde dehydrogenase family. Dimer of dimers. K(+) serves as cofactor.

It carries out the reaction betaine aldehyde + NAD(+) + H2O = glycine betaine + NADH + 2 H(+). It participates in amine and polyamine biosynthesis; betaine biosynthesis via choline pathway; betaine from betaine aldehyde: step 1/1. In terms of biological role, involved in the biosynthesis of the osmoprotectant glycine betaine. Catalyzes the irreversible oxidation of betaine aldehyde to the corresponding acid. The protein is Betaine aldehyde dehydrogenase of Pseudomonas fluorescens (strain ATCC BAA-477 / NRRL B-23932 / Pf-5).